The sequence spans 222 residues: MTEGLLALGIEQLGLDLSPQNVADLELFLQEMTRWNQVHNLTAIDNEEGSIRLHLIDSIAVLPVMRRFLPQQNPKIADLGSGGGLPAIPIAIVEPNWRLTLIEAIRKKTAFLQHVRGKLKLKNIEVISDRVENVALQQSGQFDAVISRAFTNLARFLDLSLPLLKPDGLVFAMKAKRADEEMQNVSMQDWHLLADEPLHIPNLAVERRLLVLTPVRKLPLPI.

S-adenosyl-L-methionine-binding positions include Gly80, Leu85, 131–132 (VE), and Arg148.

This sequence belongs to the methyltransferase superfamily. RNA methyltransferase RsmG family.

The protein localises to the cytoplasm. It carries out the reaction guanosine(527) in 16S rRNA + S-adenosyl-L-methionine = N(7)-methylguanosine(527) in 16S rRNA + S-adenosyl-L-homocysteine. Functionally, specifically methylates the N7 position of guanine in position 527 of 16S rRNA. In Polynucleobacter asymbioticus (strain DSM 18221 / CIP 109841 / QLW-P1DMWA-1) (Polynucleobacter necessarius subsp. asymbioticus), this protein is Ribosomal RNA small subunit methyltransferase G.